The chain runs to 552 residues: Outer dynein arm protein 1 (552 aa).

Residues methionine 1–leucine 27 form a disordered region. A compositionally biased stretch (gly residues) spans arginine 8–glycine 22. 3 coiled-coil regions span residues glycine 28–lysine 59, serine 120–leucine 260, and threonine 331–arginine 395. 2 disordered regions span residues asparagine 482–histidine 515 and leucine 528–arginine 552. Over residues glutamine 493–glutamate 506 the composition is skewed to acidic residues.

Belongs to the ODA1/DCC2 family. As to quaternary structure, component of the outer dynein arm complex.

It localises to the cytoplasm. Its subcellular location is the cytoskeleton. It is found in the cilium axoneme. Functionally, component of the outer dynein arm complex required for assembly of the outer dynein arm-docking complex (ODA-DC) and the outer dynein arm onto the doublet microtubule. This Chlamydomonas reinhardtii (Chlamydomonas smithii) protein is Outer dynein arm protein 1 (ODA1).